Reading from the N-terminus, the 1266-residue chain is Neuronal-glial cell adhesion molecule (1266 aa).

Positions 1–20 (MALPMVGLLLLLLLGGPGAA) are cleaved as a signal peptide. The Extracellular segment spans residues 21–1130 (ITIPPEYGAH…PQPGGGVCTK (1110 aa)). Ig-like C2-type domains lie at 36–128 (PELT…NVIA), 135–221 (PKEK…KEPL), 236–322 (PRLL…HSVT), 327–413 (PYWV…AFLH), 418–506 (PLRM…ALLE), and 510–597 (PTRI…AQLR). Intrachain disulfides connect Cys-58/Cys-110, Cys-154/Cys-205, Cys-260/Cys-306, and Cys-348/Cys-397. Asn-97 carries an N-linked (GlcNAc...) asparagine glycan. Residues Asn-288, Asn-390, Asn-434, Asn-472, and Asn-498 are each glycosylated (N-linked (GlcNAc...) asparagine). The cysteines at positions 441 and 490 are disulfide-linked. Cys-532 and Cys-581 are disulfide-bonded. 5 consecutive Fibronectin type-III domains span residues 603-698 (PSRD…TPPA), 700-804 (PERN…SGED), 809-930 (YPEN…TPEG), 934-1021 (PPEE…TKPE), and 1022-1118 (PPSP…TNGT). The tract at residues 685 to 710 (EHHAPSAPIETPPAAPERNPGGVHGE) is disordered. Residues Asn-712 and Asn-819 are each glycosylated (N-linked (GlcNAc...) asparagine). A disordered region spans residues 857–882 (SRRQAPPDPPQIPQSPAEDPPPFPPV). Positions 862–881 (PPDPPQIPQSPAEDPPPFPP) are enriched in pro residues. Positions 914–916 (RGD) match the Cell attachment site motif. The interval 1004 to 1025 (STPRERPALQTVGSTKPEPPSP) is disordered. N-linked (GlcNAc...) asparagine glycans are attached at residues Asn-1061, Asn-1075, Asn-1100, and Asn-1116. A helical transmembrane segment spans residues 1131–1153 (GWFIGFVSSVVLLLLILLILCFI). At 1154–1266 (KRSKGGKYSV…ASPCAGPPLD (113 aa)) the chain is on the cytoplasmic side. The segment covering 1163 to 1195 (VKDKEDTQVDSEARPMKDETFGEYRSLESEAEK) has biased composition (basic and acidic residues). The segment at 1163-1266 (VKDKEDTQVD…ASPCAGPPLD (104 aa)) is disordered. Gly residues predominate over residues 1199 to 1211 (SGSGAGSGVGSPG).

The protein belongs to the immunoglobulin superfamily. L1/neurofascin/NgCAM family. In terms of assembly, binds to itself and to axonin 1. In terms of tissue distribution, brain.

The protein resides in the cell membrane. In terms of biological role, mediates the adhesion of neurons to neurons and neurons to glia. It is involved in neuronal migration, neurite fasciculation and outgrowth. This is Neuronal-glial cell adhesion molecule from Gallus gallus (Chicken).